Here is a 260-residue protein sequence, read N- to C-terminus: UPF0328 protein ECU07_1870/ECU10_0030 (260 aa).

This sequence belongs to the UPF0328 family.

This Encephalitozoon cuniculi (strain GB-M1) (Microsporidian parasite) protein is UPF0328 protein ECU07_1870/ECU10_0030.